Here is a 170-residue protein sequence, read N- to C-terminus: NADH-quinone oxidoreductase subunit B (170 aa).

Residues cysteine 37, cysteine 38, cysteine 102, and cysteine 131 each contribute to the [4Fe-4S] cluster site.

This sequence belongs to the complex I 20 kDa subunit family. In terms of assembly, NDH-1 is composed of 14 different subunits. Subunits NuoB, C, D, E, F, and G constitute the peripheral sector of the complex. [4Fe-4S] cluster serves as cofactor.

Its subcellular location is the cell inner membrane. The enzyme catalyses a quinone + NADH + 5 H(+)(in) = a quinol + NAD(+) + 4 H(+)(out). NDH-1 shuttles electrons from NADH, via FMN and iron-sulfur (Fe-S) centers, to quinones in the respiratory chain. The immediate electron acceptor for the enzyme in this species is believed to be ubiquinone. Couples the redox reaction to proton translocation (for every two electrons transferred, four hydrogen ions are translocated across the cytoplasmic membrane), and thus conserves the redox energy in a proton gradient. The polypeptide is NADH-quinone oxidoreductase subunit B (Geotalea daltonii (strain DSM 22248 / JCM 15807 / FRC-32) (Geobacter daltonii)).